We begin with the raw amino-acid sequence, 219 residues long: Orotate phosphoribosyltransferase (219 aa).

Lysine 26 is a 5-phospho-alpha-D-ribose 1-diphosphate binding site. 34-35 provides a ligand contact to orotate; that stretch reads FF. 5-phospho-alpha-D-ribose 1-diphosphate-binding positions include 72 to 73, arginine 98, lysine 99, lysine 102, histidine 104, and 124 to 132; these read YK and DDVITAGTA. The orotate site is built by threonine 128 and arginine 156.

The protein belongs to the purine/pyrimidine phosphoribosyltransferase family. PyrE subfamily. As to quaternary structure, homodimer. Requires Mg(2+) as cofactor.

The enzyme catalyses orotidine 5'-phosphate + diphosphate = orotate + 5-phospho-alpha-D-ribose 1-diphosphate. Its pathway is pyrimidine metabolism; UMP biosynthesis via de novo pathway; UMP from orotate: step 1/2. Its function is as follows. Catalyzes the transfer of a ribosyl phosphate group from 5-phosphoribose 1-diphosphate to orotate, leading to the formation of orotidine monophosphate (OMP). In Stenotrophomonas maltophilia (strain R551-3), this protein is Orotate phosphoribosyltransferase.